The primary structure comprises 332 residues: Small ribosomal subunit biogenesis GTPase RsgA (332 aa).

The CP-type G domain occupies 103 to 259 (RQQLIAANLD…LIDTPGMREL (157 aa)). GTP-binding positions include 148–151 (TKVD) and 201–209 (GSSGAGKST). Zn(2+) contacts are provided by Cys-281, Cys-286, His-288, and Cys-294.

This sequence belongs to the TRAFAC class YlqF/YawG GTPase family. RsgA subfamily. As to quaternary structure, monomer. Associates with 30S ribosomal subunit, binds 16S rRNA. The cofactor is Zn(2+).

It localises to the cytoplasm. Functionally, one of several proteins that assist in the late maturation steps of the functional core of the 30S ribosomal subunit. Helps release RbfA from mature subunits. May play a role in the assembly of ribosomal proteins into the subunit. Circularly permuted GTPase that catalyzes slow GTP hydrolysis, GTPase activity is stimulated by the 30S ribosomal subunit. The chain is Small ribosomal subunit biogenesis GTPase RsgA from Xylella fastidiosa (strain M12).